A 199-amino-acid polypeptide reads, in one-letter code: NAD(P)H dehydrogenase (quinone) (199 aa).

The Flavodoxin-like domain occupies Val-4–Ile-190. Residues Ser-10–Ile-15 and Thr-78–Phe-80 each bind FMN. Tyr-12 is a binding site for NAD(+). Trp-98 contacts substrate. FMN contacts are provided by residues Ser-113–Gly-119 and His-134.

It belongs to the WrbA family. FMN serves as cofactor.

It carries out the reaction a quinone + NADH + H(+) = a quinol + NAD(+). The catalysed reaction is a quinone + NADPH + H(+) = a quinol + NADP(+). This Bradyrhizobium sp. (strain BTAi1 / ATCC BAA-1182) protein is NAD(P)H dehydrogenase (quinone).